The sequence spans 269 residues: Probable 3-deoxy-manno-octulosonic acid transferase (269 aa).

Its subcellular location is the cytoplasm. It carries out the reaction an alpha-Kdo-(2-&gt;4)-alpha-Kdo-(2-&gt;6)-lipid IVA + CMP-3-deoxy-beta-D-manno-octulosonate = an alpha-Kdo-(2-&gt;4)-alpha-Kdo-(2-&gt;4)-alpha-Kdo-(2-&gt;6)-lipid IVA + CMP + H(+). Its pathway is bacterial outer membrane biogenesis; LPS core biosynthesis. Functionally, involved in the biosynthesis of the core oligosaccharide region of lipopolysaccharide (LPS). Required for the addition of 3-deoxy-D-manno-oct-2-ulosonic acid III (KdoIII) to the KdoII residue of the inner lipopolysaccharide core. This chain is Probable 3-deoxy-manno-octulosonic acid transferase, found in Salmonella typhimurium (strain LT2 / SGSC1412 / ATCC 700720).